Consider the following 329-residue polypeptide: Serpentine receptor class alpha-3 (329 aa).

The next 7 helical transmembrane spans lie at 25 to 45, 57 to 77, 104 to 124, 144 to 164, 187 to 207, 238 to 258, and 273 to 293; these read LIYF…LKVI, ILLY…GITI, YLEM…GLLF, GIIT…IIIW, TMFF…SLLI, ICFL…GVFL, and FWVV…ILLI.

The protein belongs to the nematode receptor-like protein sra family.

It is found in the membrane. The chain is Serpentine receptor class alpha-3 (sra-3) from Caenorhabditis elegans.